Reading from the N-terminus, the 220-residue chain is Putative vesicle-associated membrane protein 726 (220 aa).

Over 1-196 (MGQQSLIYSF…LWFENMKIKL (196 aa)) the chain is Cytoplasmic. The region spanning 10–114 (FVARGTVILA…SLNKEFGSKL (105 aa)) is the Longin domain. Residues 130–190 (KLSKVKAQVT…TKMKRKLWFE (61 aa)) form the v-SNARE coiled-coil homology domain. A helical; Anchor for type IV membrane protein transmembrane segment spans residues 197–217 (IVFGIIVALILIIILSVCHGF). Over 218-220 (KCT) the chain is Vesicular.

Belongs to the synaptobrevin family. As to expression, expressed in flowers, leaves, stems and roots.

It is found in the cell membrane. It localises to the early endosome membrane. In terms of biological role, involved in the targeting and/or fusion of transport vesicles to their target membrane. This is Putative vesicle-associated membrane protein 726 (VAMP726) from Arabidopsis thaliana (Mouse-ear cress).